A 549-amino-acid polypeptide reads, in one-letter code: Rhodopsin kinase grk7a (549 aa).

S33 carries the post-translational modification Phosphoserine. In terms of domain architecture, RGS spans 53-171; that stretch reads FESLCEKQPI…QASPFFDKFL (119 aa). Residues 186-449 enclose the Protein kinase domain; that stretch reads FYEFRTLGKG…NDDPRKHEWF (264 aa). ATP-binding positions include 192-200 and K215; that span reads LGKGGFGEV. Catalysis depends on D311, which acts as the Proton acceptor. The AGC-kinase C-terminal domain maps to 450–515; sequence KSINFARLEA…GAVSIAWQQE (66 aa). The segment at 522-549 is disordered; sequence FDELSDPNRKESSGGSDDDKKSGTCTLL. The span at 527–543 shows a compositional bias: basic and acidic residues; that stretch reads DPNRKESSGGSDDDKKS. Position 546 is a cysteine methyl ester (C546). C546 is lipidated: S-geranylgeranyl cysteine. A propeptide spans 547 to 549 (removed in mature form); it reads TLL.

This sequence belongs to the protein kinase superfamily. AGC Ser/Thr protein kinase family. GPRK subfamily. In terms of processing, phosphorylation at Ser-33 is regulated by light and activated by cAMP.

The protein localises to the membrane. The enzyme catalyses L-threonyl-[rhodopsin] + ATP = O-phospho-L-threonyl-[rhodopsin] + ADP + H(+). The catalysed reaction is L-seryl-[rhodopsin] + ATP = O-phospho-L-seryl-[rhodopsin] + ADP + H(+). In terms of biological role, retina-specific kinase involved in the shutoff of the photoresponse and adaptation to changing light conditions via cone opsin phosphorylation, including rhodopsin (RHO). The chain is Rhodopsin kinase grk7a (grk7a) from Danio rerio (Zebrafish).